An 886-amino-acid polypeptide reads, in one-letter code: Translation initiation factor IF-2 (886 aa).

Disordered regions lie at residues 1-25 (MSETKNPGDHTLSVSPTKTLSLKRP), 50-229 (RRAL…PAEE), and 253-272 (KGAEQKSRGRLTVASATGDE). Positions 50–60 (RRALGEPHVLR) are enriched in basic and acidic residues. Low complexity predominate over residues 63 to 73 (APALDVVAPAP). Residues 74-83 (QAAPPAPTQQ) show a composition bias toward pro residues. The span at 84–106 (PQPRVASRPQPQQRSSSGVILRS) shows a compositional bias: low complexity. Residues 107–181 (LTEEEREARS…KRRSESEAKR (75 aa)) are compositionally biased toward basic and acidic residues. Residues 185-225 (GGEPAPAGANAAPRKAPALSAAPGSAAPSGQPGPAGAVGAR) show a composition bias toward low complexity. The 171-residue stretch at 383 to 553 (SRPPVVTIMG…ALQAELLDLK (171 aa)) folds into the tr-type G domain. The tract at residues 392–399 (GHVDHGKT) is G1. 392-399 (GHVDHGKT) is a GTP binding site. The segment at 417 to 421 (GITQH) is G2. Residues 439-442 (DTPG) are G3. GTP-binding positions include 439 to 443 (DTPGH) and 493 to 496 (NKID). The tract at residues 493-496 (NKID) is G4. The segment at 529 to 531 (SAT) is G5.

This sequence belongs to the TRAFAC class translation factor GTPase superfamily. Classic translation factor GTPase family. IF-2 subfamily.

It localises to the cytoplasm. Functionally, one of the essential components for the initiation of protein synthesis. Protects formylmethionyl-tRNA from spontaneous hydrolysis and promotes its binding to the 30S ribosomal subunits. Also involved in the hydrolysis of GTP during the formation of the 70S ribosomal complex. This Methylocella silvestris (strain DSM 15510 / CIP 108128 / LMG 27833 / NCIMB 13906 / BL2) protein is Translation initiation factor IF-2.